A 171-amino-acid polypeptide reads, in one-letter code: Tubulin polymerization-promoting protein family member 2 (171 aa).

Residues 120–171 (LTDTSKYTGTHKERFDESGKGKGIAGREDVTDNSGYVSGYKGAGTYDKKGSN) form a disordered region. Over residues 129 to 149 (THKERFDESGKGKGIAGREDV) the composition is skewed to basic and acidic residues.

Belongs to the TPPP family.

It is found in the cytoplasm. It localises to the cytosol. The protein localises to the cell projection. The protein resides in the cilium. Its subcellular location is the flagellum. Its function is as follows. Probable regulator of microtubule dynamics required for sperm motility. In contrast to other members of the family, has no microtubule bundling activity. In Bos taurus (Bovine), this protein is Tubulin polymerization-promoting protein family member 2.